The sequence spans 124 residues: Ribonuclease pancreatic (124 aa).

A compositionally biased stretch (basic and acidic residues) spans 1–13 (SETAAEKFERQHM). Residues 1–23 (SETAAEKFERQHMDSYSSSSSNS) are disordered. Lysine 7 and arginine 10 together coordinate substrate. Histidine 12 serves as the catalytic Proton acceptor. 4 disulfides stabilise this stretch: cysteine 26–cysteine 84, cysteine 40–cysteine 95, cysteine 58–cysteine 110, and cysteine 65–cysteine 72. Substrate is bound by residues 41–45 (KPVNT), lysine 66, and arginine 85. Catalysis depends on histidine 119, which acts as the Proton donor.

The protein belongs to the pancreatic ribonuclease family. Monomer. Interacts with and forms tight 1:1 complexes with RNH1. Dimerization of two such complexes may occur. Interaction with RNH1 inhibits this protein. Pancreas.

It localises to the secreted. The catalysed reaction is an [RNA] containing cytidine + H2O = an [RNA]-3'-cytidine-3'-phosphate + a 5'-hydroxy-ribonucleotide-3'-[RNA].. It carries out the reaction an [RNA] containing uridine + H2O = an [RNA]-3'-uridine-3'-phosphate + a 5'-hydroxy-ribonucleotide-3'-[RNA].. Functionally, endonuclease that catalyzes the cleavage of RNA on the 3' side of pyrimidine nucleotides. Acts on single-stranded and double-stranded RNA. In Camelus dromedarius (Dromedary), this protein is Ribonuclease pancreatic (RNASE1).